Reading from the N-terminus, the 381-residue chain is DNA primase DnaG (381 aa).

One can recognise a Toprim domain in the interval 173-259; sequence DAILVVEGRS…EVEDLEKDEI (87 aa). The Mg(2+) site is built by E179, D221, and D223.

This sequence belongs to the archaeal DnaG primase family. In terms of assembly, forms a ternary complex with MCM helicase and DNA. Component of the archaeal exosome complex. It depends on Mg(2+) as a cofactor.

The enzyme catalyses ssDNA + n NTP = ssDNA/pppN(pN)n-1 hybrid + (n-1) diphosphate.. Its function is as follows. RNA polymerase that catalyzes the synthesis of short RNA molecules used as primers for DNA polymerase during DNA replication. Also part of the exosome, which is a complex involved in RNA degradation. Acts as a poly(A)-binding protein that enhances the interaction between heteromeric, adenine-rich transcripts and the exosome. The chain is DNA primase DnaG from Methanothermobacter thermautotrophicus (strain ATCC 29096 / DSM 1053 / JCM 10044 / NBRC 100330 / Delta H) (Methanobacterium thermoautotrophicum).